Consider the following 175-residue polypeptide: Translation initiation factor IF-3 (175 aa).

This sequence belongs to the IF-3 family. In terms of assembly, monomer.

The protein localises to the cytoplasm. In terms of biological role, IF-3 binds to the 30S ribosomal subunit and shifts the equilibrium between 70S ribosomes and their 50S and 30S subunits in favor of the free subunits, thus enhancing the availability of 30S subunits on which protein synthesis initiation begins. This is Translation initiation factor IF-3 from Staphylococcus carnosus (strain TM300).